The sequence spans 260 residues: RNA polymerase sigma-G factor (260 aa).

The recognizes anti-sigma-G factor Gin (csfB) stretch occupies residues 1–71 (MSRNKVEICG…GEYVDDLFQV (71 aa)). The Polymerase core binding signature appears at 67–80 (DLFQVGCIGLMKSI). A DNA-binding region (H-T-H motif) is located at residues 229–248 (QMEVAEEIGISQAQVSRLEK).

This sequence belongs to the sigma-70 factor family. In terms of assembly, interacts with anti-sigma-G factor Gin (csfB).

With respect to regulation, activity repressed by anti-sigma-G factor Gin (csfB) and Lon protease during the early stages of forespore development. When both Gin and sigma-G are expressed in E.coli Gin inhibits sigma-G activity, strongly suggesting Gin inhibits by direct physical interaction. Its function is as follows. Sigma factors are initiation factors that promote the attachment of RNA polymerase to specific initiation sites and are then released. This sigma factor is responsible for the expression of sporulation specific genes in the forespore. This is RNA polymerase sigma-G factor (sigG) from Bacillus subtilis (strain 168).